A 448-amino-acid chain; its full sequence is Probable glycine dehydrogenase (decarboxylating) subunit 1 (448 aa).

The protein belongs to the GcvP family. N-terminal subunit subfamily. The glycine cleavage system is composed of four proteins: P, T, L and H. In this organism, the P 'protein' is a heterodimer of two subunits.

It catalyses the reaction N(6)-[(R)-lipoyl]-L-lysyl-[glycine-cleavage complex H protein] + glycine + H(+) = N(6)-[(R)-S(8)-aminomethyldihydrolipoyl]-L-lysyl-[glycine-cleavage complex H protein] + CO2. In terms of biological role, the glycine cleavage system catalyzes the degradation of glycine. The P protein binds the alpha-amino group of glycine through its pyridoxal phosphate cofactor; CO(2) is released and the remaining methylamine moiety is then transferred to the lipoamide cofactor of the H protein. The polypeptide is Probable glycine dehydrogenase (decarboxylating) subunit 1 (Shouchella clausii (strain KSM-K16) (Alkalihalobacillus clausii)).